A 256-amino-acid chain; its full sequence is Probable aquaporin TIP5-1 (256 aa).

Position 1 is an N-acetylmethionine (methionine 1). The next 5 membrane-spanning stretches (helical) occupy residues 24-44, 57-77, 89-109, 144-164, and 171-191; these read CYVS…GSVM, PFGV…SVYI, AVTF…MFYW, FGAS…VFTA, and LPLA…VLAA. Residues 87 to 89 carry the NPA 1 motif; it reads NPA. Positions 200–202 match the NPA 2 motif; that stretch reads NPA. Residues 222–242 form a helical membrane-spanning segment; sequence VGPLLGGATAALVYDNVVVPV. Serine 249 bears the Phosphoserine mark.

It belongs to the MIP/aquaporin (TC 1.A.8) family. TIP (TC 1.A.8.10) subfamily.

The protein localises to the membrane. Its function is as follows. Potential aquaporin, which may facilitate the transport of water and small neutral solutes across cell membranes. This chain is Probable aquaporin TIP5-1 (TIP5-1), found in Arabidopsis thaliana (Mouse-ear cress).